The chain runs to 143 residues: Transcriptional regulator MraZ (143 aa).

2 consecutive SpoVT-AbrB domains span residues 5–47 and 76–119; these read EYKH…SLKE and ACEC…SEEN.

The protein belongs to the MraZ family. Forms oligomers.

The protein resides in the cytoplasm. It localises to the nucleoid. In Caldicellulosiruptor saccharolyticus (strain ATCC 43494 / DSM 8903 / Tp8T 6331), this protein is Transcriptional regulator MraZ.